The sequence spans 384 residues: S-adenosylmethionine synthase (384 aa).

Residue His-15 coordinates ATP. Asp-17 contributes to the Mg(2+) binding site. Glu-43 serves as a coordination point for K(+). L-methionine contacts are provided by Glu-56 and Gln-99. The flexible loop stretch occupies residues 99 to 109; the sequence is QSPDINQGVDK. Residues 164 to 166, 230 to 231, Asp-239, 245 to 246, Ala-262, and Lys-266 contribute to the ATP site; these read DAK, RF, and RK. Asp-239 serves as a coordination point for L-methionine. Lys-270 contacts L-methionine.

It belongs to the AdoMet synthase family. As to quaternary structure, homotetramer; dimer of dimers. The cofactor is Mg(2+). K(+) is required as a cofactor.

The protein resides in the cytoplasm. It carries out the reaction L-methionine + ATP + H2O = S-adenosyl-L-methionine + phosphate + diphosphate. It participates in amino-acid biosynthesis; S-adenosyl-L-methionine biosynthesis; S-adenosyl-L-methionine from L-methionine: step 1/1. Functionally, catalyzes the formation of S-adenosylmethionine (AdoMet) from methionine and ATP. The overall synthetic reaction is composed of two sequential steps, AdoMet formation and the subsequent tripolyphosphate hydrolysis which occurs prior to release of AdoMet from the enzyme. This Aliivibrio salmonicida (strain LFI1238) (Vibrio salmonicida (strain LFI1238)) protein is S-adenosylmethionine synthase.